The sequence spans 108 residues: DNA-binding protein HBbu (108 aa).

This sequence belongs to the bacterial histone-like protein family.

Histone-like DNA-binding protein which is capable of wrapping DNA to stabilize it, and thus to prevent its denaturation under extreme environmental conditions. The polypeptide is DNA-binding protein HBbu (hbb) (Borrelia garinii subsp. bavariensis (strain ATCC BAA-2496 / DSM 23469 / PBi) (Borreliella bavariensis)).